The chain runs to 308 residues: NAD-dependent protein deacylase SIR4 (308 aa).

The N-terminal 16 residues, M1–A16, are a transit peptide targeting the mitochondrion. One can recognise a Deacetylase sirtuin-type domain in the interval T28 to L308. Residues G53–H73 and Q129–D132 each bind NAD(+). H147 functions as the Proton acceptor in the catalytic mechanism. Zn(2+)-binding residues include C155, C158, C211, and C214. Residues G251 to S253, N277 to G279, and I297 each bind NAD(+).

Belongs to the sirtuin family. Class II subfamily. Requires Zn(2+) as cofactor.

It localises to the mitochondrion matrix. The enzyme catalyses N(6)-acetyl-L-lysyl-[protein] + NAD(+) + H2O = 2''-O-acetyl-ADP-D-ribose + nicotinamide + L-lysyl-[protein]. NAD-dependent protein deacylase. Catalyzes the NAD-dependent hydrolysis of acyl groups from lysine residues. This Monosiga brevicollis (Choanoflagellate) protein is NAD-dependent protein deacylase SIR4.